We begin with the raw amino-acid sequence, 158 residues long: Transcription elongation factor GreA (158 aa).

Residues 46–66 (AEYEAAKERQGFIEGRISELE) adopt a coiled-coil conformation.

It belongs to the GreA/GreB family.

In terms of biological role, necessary for efficient RNA polymerase transcription elongation past template-encoded arresting sites. The arresting sites in DNA have the property of trapping a certain fraction of elongating RNA polymerases that pass through, resulting in locked ternary complexes. Cleavage of the nascent transcript by cleavage factors such as GreA or GreB allows the resumption of elongation from the new 3'terminus. GreA releases sequences of 2 to 3 nucleotides. This Neisseria meningitidis serogroup B (strain ATCC BAA-335 / MC58) protein is Transcription elongation factor GreA.